The primary structure comprises 111 residues: N-alpha-acetyltransferase 38-B, NatC auxiliary subunit (111 aa).

The region spanning 28–106 (TARHKLESLL…IVSIQVELET (79 aa)) is the Sm domain.

The protein belongs to the snRNP Sm proteins family. Component of the N-terminal acetyltransferase C (NatC) complex, which is composed of naa35, naa38 and naa30.

It is found in the cytoplasm. Functionally, auxillary component of the N-terminal acetyltransferase C (NatC) complex which catalyzes acetylation of N-terminal methionine residues. This is N-alpha-acetyltransferase 38-B, NatC auxiliary subunit (naa38-b) from Xenopus laevis (African clawed frog).